A 141-amino-acid chain; its full sequence is Hemoglobin subunit alpha (141 aa).

The Globin domain occupies 1–141 (VLSGTDKSNI…VSTVLTSKYR (141 aa)). Ser3 carries the phosphoserine modification. Residues Lys7 and Lys11 each carry the N6-succinyllysine modification. Position 16 is an N6-acetyllysine; alternate (Lys16). The residue at position 16 (Lys16) is an N6-succinyllysine; alternate. A Phosphotyrosine modification is found at Tyr24. A Phosphoserine modification is found at Ser35. Lys40 is subject to N6-succinyllysine. The residue at position 49 (Ser49) is a Phosphoserine. Residue His58 participates in O2 binding. His87 provides a ligand contact to heme b. A Phosphoserine modification is found at Ser102. Thr108 bears the Phosphothreonine mark. Residue Ser124 is modified to Phosphoserine. Phosphothreonine occurs at positions 134 and 137. A Phosphoserine modification is found at Ser138.

Belongs to the globin family. In terms of assembly, heterotetramer of two alpha chains and two beta chains. As to expression, red blood cells.

Functionally, involved in oxygen transport from the lung to the various peripheral tissues. In terms of biological role, hemopressin acts as an antagonist peptide of the cannabinoid receptor CNR1. Hemopressin-binding efficiently blocks cannabinoid receptor CNR1 and subsequent signaling. This is Hemoglobin subunit alpha (HBA) from Talpa europaea (European mole).